The chain runs to 547 residues: CTP synthase (547 aa).

Residues methionine 1–isoleucine 265 form an amidoligase domain region. Serine 13 serves as a coordination point for CTP. Serine 13 is a binding site for UTP. ATP is bound by residues serine 14–leucine 19 and aspartate 71. Residues aspartate 71 and glutamate 139 each contribute to the Mg(2+) site. Residues aspartate 146 to glutamate 148, lysine 186 to glutamine 191, and lysine 222 each bind CTP. UTP-binding positions include lysine 186 to glutamine 191 and lysine 222. The region spanning arginine 291–leucine 546 is the Glutamine amidotransferase type-1 domain. Glycine 352 is a binding site for L-glutamine. The active-site Nucleophile; for glutamine hydrolysis is the cysteine 379. L-glutamine is bound by residues leucine 380–glutamine 383, glutamate 403, and arginine 474. Catalysis depends on residues histidine 519 and glutamate 521.

It belongs to the CTP synthase family. Homotetramer.

The catalysed reaction is UTP + L-glutamine + ATP + H2O = CTP + L-glutamate + ADP + phosphate + 2 H(+). The enzyme catalyses L-glutamine + H2O = L-glutamate + NH4(+). It catalyses the reaction UTP + NH4(+) + ATP = CTP + ADP + phosphate + 2 H(+). The protein operates within pyrimidine metabolism; CTP biosynthesis via de novo pathway; CTP from UDP: step 2/2. Its activity is regulated as follows. Allosterically activated by GTP, when glutamine is the substrate; GTP has no effect on the reaction when ammonia is the substrate. The allosteric effector GTP functions by stabilizing the protein conformation that binds the tetrahedral intermediate(s) formed during glutamine hydrolysis. Inhibited by the product CTP, via allosteric rather than competitive inhibition. Catalyzes the ATP-dependent amination of UTP to CTP with either L-glutamine or ammonia as the source of nitrogen. Regulates intracellular CTP levels through interactions with the four ribonucleotide triphosphates. This is CTP synthase from Paracoccus denitrificans (strain Pd 1222).